The sequence spans 488 residues: Probable glycine dehydrogenase (decarboxylating) subunit 2 (488 aa).

N6-(pyridoxal phosphate)lysine is present on Lys274.

Belongs to the GcvP family. C-terminal subunit subfamily. As to quaternary structure, the glycine cleavage system is composed of four proteins: P, T, L and H. In this organism, the P 'protein' is a heterodimer of two subunits. Requires pyridoxal 5'-phosphate as cofactor.

It carries out the reaction N(6)-[(R)-lipoyl]-L-lysyl-[glycine-cleavage complex H protein] + glycine + H(+) = N(6)-[(R)-S(8)-aminomethyldihydrolipoyl]-L-lysyl-[glycine-cleavage complex H protein] + CO2. In terms of biological role, the glycine cleavage system catalyzes the degradation of glycine. The P protein binds the alpha-amino group of glycine through its pyridoxal phosphate cofactor; CO(2) is released and the remaining methylamine moiety is then transferred to the lipoamide cofactor of the H protein. This chain is Probable glycine dehydrogenase (decarboxylating) subunit 2, found in Listeria innocua serovar 6a (strain ATCC BAA-680 / CLIP 11262).